The sequence spans 125 residues: MEIGVDIVELERIERAHNRYGRKFLEKFMTQPEIELCLAKPSPVASIAGRFAAKEAVVKALGTGISGGVFWKSFEVLNDSRGRPVVTLLDKACFPPGCVIKISISHDRHSAIAAALLQYKTRGRC.

Mg(2+) is bound by residues D6 and E55.

The protein belongs to the P-Pant transferase superfamily. AcpS family. Mg(2+) serves as cofactor.

The protein resides in the cytoplasm. It catalyses the reaction apo-[ACP] + CoA = holo-[ACP] + adenosine 3',5'-bisphosphate + H(+). Transfers the 4'-phosphopantetheine moiety from coenzyme A to a Ser of acyl-carrier-protein. The protein is Holo-[acyl-carrier-protein] synthase of Chlorobium phaeovibrioides (strain DSM 265 / 1930) (Prosthecochloris vibrioformis (strain DSM 265)).